The following is a 127-amino-acid chain: Spore germination protein 1 (127 aa).

The N-terminal stretch at 1-25 (MNIKNSLILIISTIFVLSMINGGLT) is a signal peptide. 2 N-linked (GlcNAc...) asparagine glycosylation sites follow: asparagine 54 and asparagine 118.

The protein belongs to the Dictyostelium gerABC family.

It is found in the secreted. This Dictyostelium discoideum (Social amoeba) protein is Spore germination protein 1 (gerA).